Reading from the N-terminus, the 113-residue chain is Large ribosomal subunit protein uL22 (113 aa).

This sequence belongs to the universal ribosomal protein uL22 family. In terms of assembly, part of the 50S ribosomal subunit.

Its function is as follows. This protein binds specifically to 23S rRNA; its binding is stimulated by other ribosomal proteins, e.g. L4, L17, and L20. It is important during the early stages of 50S assembly. It makes multiple contacts with different domains of the 23S rRNA in the assembled 50S subunit and ribosome. In terms of biological role, the globular domain of the protein is located near the polypeptide exit tunnel on the outside of the subunit, while an extended beta-hairpin is found that lines the wall of the exit tunnel in the center of the 70S ribosome. This Bacillus thuringiensis subsp. konkukian (strain 97-27) protein is Large ribosomal subunit protein uL22.